The primary structure comprises 2054 residues: Multiple PDZ domain protein (2054 aa).

Residues 3 to 63 form the L27 domain; that stretch reads ETIDKNRALQ…SLQQLKDQVN (61 aa). The region spanning 138 to 225 is the PDZ 1 domain; that stretch reads IFELLKPPCG…TIQLVIARGS (88 aa). Serine 231 carries the phosphoserine modification. 4 PDZ domains span residues 258-338, 377-463, 545-626, and 692-778; these read TIEL…ARGA, DVEL…MRKG, VAHV…CRRT, and AIEL…VAKP. 2 positions are modified to phosphoserine: serine 782 and serine 1065. The PDZ 6 domain occupies 995-1076; sequence TVTIAKGSSS…IGPDIKITYV (82 aa). Residues 1110–1129 form a disordered region; it reads PELPEREEGEGEESELQNAA. Residues 1138-1230 form the PDZ 7 domain; that stretch reads RVELWREPSK…PVVFMVQSIV (93 aa). Position 1157 is an omega-N-methylarginine (arginine 1157). The segment covering 1261 to 1273 has biased composition (polar residues); the sequence is LQLTSDKAPSQSE. Positions 1261–1312 are disordered; the sequence is LQLTSDKAPSQSESESEKATLCSVPSSSPSVFSEMSSDYAQPSATTVAEDED. Residues 1283–1297 are compositionally biased toward low complexity; it reads SVPSSSPSVFSEMSS. Residues 1337–1420 enclose the PDZ 8 domain; it reads MIELEKGHSG…KVKIIFIRNA (84 aa). The tract at residues 1433-1454 is disordered; sequence AADPLPSTSESPQNKEVEPSIT. One can recognise a PDZ 9 domain in the interval 1470–1551; that stretch reads HLELPKDQGG…TVKLTVGAEN (82 aa). The segment at 1560–1594 is disordered; the sequence is AAVTASGERKDSSQTPAVPAPDLEPIPSTSRSSTP. 2 PDZ domains span residues 1613-1696 and 1709-1791; these read TIEI…YRDE and TVEL…GRIK. Residues 1795 to 1834 form a disordered region; sequence FHSERRPSQSSQVSESSLSSFSLPRSGIHTSESSESSAKK. Residues serine 1802 and serine 1808 each carry the phosphoserine modification. Low complexity predominate over residues 1802–1834; that stretch reads SQSSQVSESSLSSFSLPRSGIHTSESSESSAKK. 2 consecutive PDZ domains span residues 1846–1932 and 1971–2054; these read TVEI…VAGG and TITL…MVLS.

Interacts with F11R/JAM, CLDN1, NG2, CXADR, CRB1, MPP4 and PALS1, HTR2A, HTR2B, PLEKHA1/TAPP1 and PLEKHA2/TAPP2. Interacts with CXADR. Interacts with HTR2C, CLDN5, DLG4, GRIN1, SYNGAP1, CAMK2A and CAMK2B. Interacts with FAT4 (via cytoplasmic domain). Interacts with DLL1. Abundant in all cerebral cortical layers, especially the piriform cortex, the pyramidal cells of the CA1-CA3 subfields of the hippocampus, as well as the granular layer of the dentate gyrus. Detected in the internal granular layer and the mitral cell layer of the olfactory bulb; in the medial habenular nucleus; and in amygdaloid, thalamic, hypothalamic, and pontine nuclei. In the cerebellum, found at high levels in the granular layer. Detected in the lateral ventricle. Expression overlaps with 5-HT2C receptor expression in all regions of the brain including the choroid plexus, where 5-HT2C receptors are highly enriched.

It localises to the endomembrane system. Its subcellular location is the cell junction. The protein resides in the tight junction. It is found in the synapse. The protein localises to the apical cell membrane. It localises to the postsynaptic density. Its subcellular location is the cell projection. The protein resides in the dendrite. It is found in the synaptosome. Functionally, member of the NMDAR signaling complex that may play a role in control of AMPAR potentiation and synaptic plasticity in excitatory synapses. Promotes clustering of HT2RC at the cell surface. The sequence is that of Multiple PDZ domain protein (Mpdz) from Rattus norvegicus (Rat).